Consider the following 190-residue polypeptide: Molybdenum cofactor guanylyltransferase (190 aa).

GTP contacts are provided by residues 8-10 (LAG), Lys-20, Asp-64, and Asp-98. Asp-98 contributes to the Mg(2+) binding site.

This sequence belongs to the MobA family. As to quaternary structure, monomer. Mg(2+) is required as a cofactor.

Its subcellular location is the cytoplasm. The catalysed reaction is Mo-molybdopterin + GTP + H(+) = Mo-molybdopterin guanine dinucleotide + diphosphate. Its function is as follows. Transfers a GMP moiety from GTP to Mo-molybdopterin (Mo-MPT) cofactor (Moco or molybdenum cofactor) to form Mo-molybdopterin guanine dinucleotide (Mo-MGD) cofactor. The chain is Molybdenum cofactor guanylyltransferase from Rhodobacter capsulatus (Rhodopseudomonas capsulata).